A 206-amino-acid chain; its full sequence is Large ribosomal subunit protein uL4 (206 aa).

Residues 55-80 (AFVSGGGAKPWRQKGTGRARSGSNRS) are disordered.

The protein belongs to the universal ribosomal protein uL4 family. In terms of assembly, part of the 50S ribosomal subunit.

Its function is as follows. One of the primary rRNA binding proteins, this protein initially binds near the 5'-end of the 23S rRNA. It is important during the early stages of 50S assembly. It makes multiple contacts with different domains of the 23S rRNA in the assembled 50S subunit and ribosome. Functionally, forms part of the polypeptide exit tunnel. The polypeptide is Large ribosomal subunit protein uL4 (Nitratidesulfovibrio vulgaris (strain DSM 19637 / Miyazaki F) (Desulfovibrio vulgaris)).